Here is a 596-residue protein sequence, read N- to C-terminus: MNLCNSRFSVTFVRQCSTILTSPSAGIIQNRGSLTTKVPHWISSSLSCAHHTFQRTMNLTGQRGSRDSTGATGGNAPAGSGAGAPPPFQHPHCDRAAMYAQPVRKMSTKGGSYDYDLIVIGGGSAGLACAKEAVLNGARVACLDFVKPTPTLGTKWGVGGTCVNVGCIPKKLMHQASLLGEAVHEAAAYGWNVDEKIKPDWHKLVQSVQNHIKSVNWVTRVDLRDKKVEYINGLGSFVDSHTLLAKLKSGERTITAQTFVIAVGGRPRYPDIPGAVEYGITSDDLFSLDREPGKTLVVGAGYIGLECAGFLKGLGYEPTVMVRSIVLRGFDQQMAELVAASMEERGIPFLRKTVPLSVEKQDDGKLLVKYKNVETGEEAEDVYDTVLWAIGRKGLVDDLNLPNAGVTVQKDKIPVDSQEATNVANIYAVGDIIYGKPELTPVAVLAGRLLARRLYGGSTQRMDYKDVATTVFTPLEYACVGLSEEDAVKQFGADEIEVFHGYYKPTEFFIPQKSVRYCYLKAVAERHGDQRVYGLHYIGPVAGEVIQGFAAALKSGLTINTLINTVGIHPTTAEEFTRLAITKRSGLDPTPASCCS.

Residues 59–87 (LTGQRGSRDSTGATGGNAPAGSGAGAPPP) form a disordered region. Positions 68–79 (STGATGGNAPAG) are enriched in low complexity. FAD contacts are provided by residues 120 to 126 (IGGGSAG), 143 to 147 (LDFVK), 159 to 170 (GGTCVNVGCIPK), 233 to 235 (GLG), 262 to 266 (AVGGR), serine 282, phenylalanine 286, and tyrosine 302. Cysteine 162 and cysteine 167 are disulfide-bonded. Residues 322–328 (VRSIVLR) and proline 355 contribute to the NADP(+) site. FAD contacts are provided by residues 392–399 (RKGLVDDL), 429–432 (VGDI), 438–443 (ELTPVA), and phenylalanine 472. Histidine 569 acts as the Proton acceptor in catalysis. Residue proline 570 coordinates FAD. An intrachain disulfide couples cysteine 594 to cysteine 595.

Belongs to the class-I pyridine nucleotide-disulfide oxidoreductase family. Homodimer. FAD is required as a cofactor. In terms of tissue distribution, during embryogenesis, expression is seen in germ cell progenitors, developing midgut, hindgut and proventriculus.

It is found in the mitochondrion. The protein resides in the cytoplasm. It catalyses the reaction [thioredoxin]-dithiol + NADP(+) = [thioredoxin]-disulfide + NADPH + H(+). In terms of biological role, thioredoxin system is a major player in glutathione metabolism, due to the demonstrated absence of a glutathione reductase. Functionally interacts with the Sod/Cat reactive oxidation species (ROS) defense system and thereby has a role in preadult development and life span. Lack of a glutathione reductase suggests antioxidant defense in Drosophila, and probably in related insects, differs fundamentally from that in other organisms. The protein is Thioredoxin reductase 1, mitochondrial of Drosophila melanogaster (Fruit fly).